Here is a 346-residue protein sequence, read N- to C-terminus: Biotin synthase (346 aa).

The 219-residue stretch at 38–256 (RQVQVSTLLS…IAVARIMMPT (219 aa)) folds into the Radical SAM core domain. [4Fe-4S] cluster-binding residues include C53, C57, and C60. [2Fe-2S] cluster contacts are provided by C97, C128, C188, and R260.

It belongs to the radical SAM superfamily. Biotin synthase family. Homodimer. [4Fe-4S] cluster is required as a cofactor. [2Fe-2S] cluster serves as cofactor.

The enzyme catalyses (4R,5S)-dethiobiotin + (sulfur carrier)-SH + 2 reduced [2Fe-2S]-[ferredoxin] + 2 S-adenosyl-L-methionine = (sulfur carrier)-H + biotin + 2 5'-deoxyadenosine + 2 L-methionine + 2 oxidized [2Fe-2S]-[ferredoxin]. Its pathway is cofactor biosynthesis; biotin biosynthesis; biotin from 7,8-diaminononanoate: step 2/2. In terms of biological role, catalyzes the conversion of dethiobiotin (DTB) to biotin by the insertion of a sulfur atom into dethiobiotin via a radical-based mechanism. The sequence is that of Biotin synthase from Escherichia coli O157:H7.